A 107-amino-acid polypeptide reads, in one-letter code: Guanylin (107 aa).

The first 20 residues, 1–20 (MNTFLLSALCLGAWAALVGA), serve as a signal peptide directing secretion. A propeptide spanning residues 21–92 (VTVQDGDFSF…LNRLAVIAQD (72 aa)) is cleaved from the precursor. Disulfide bonds link Cys-61–Cys-74, Cys-96–Cys-104, and Cys-99–Cys-107.

Belongs to the guanylin family.

Its subcellular location is the secreted. Functionally, endogenous activator of intestinal guanylate cyclase. It stimulates this enzyme through the same receptor binding region as the heat-stable enterotoxins. This Cavia porcellus (Guinea pig) protein is Guanylin (GUCA2A).